Consider the following 218-residue polypeptide: uncharacterized protein (218 aa).

This is an uncharacterized protein from Methanocaldococcus jannaschii (strain ATCC 43067 / DSM 2661 / JAL-1 / JCM 10045 / NBRC 100440) (Methanococcus jannaschii).